Reading from the N-terminus, the 506-residue chain is MEKFKRSLELERSQQHNFIYPLIFQEYIYALAHDRGLNRSIFLENMGYDNKSSLLIVKRLITYLITQMYQQNHFIFSGNDSNQNKFLGYNTKLYSQMIFEGFAVVVEIPFYLRLLSFLEGKERVKSHNLRSIHSIFPFFEDKFSHLNYVLDILIPHPIHLEILVQTLRYWVKDASSLHLLRFFLHEYPIWNSLITQKKSSFSFSKRNQRFFLFLYNFHVCEYESIFVFLRNQSYHLRSISSETFLERISFYKKIELELFTKDFKAILWVFKEPFLHYVRYRGKALLVSKGTSLLMNKWKYYLVNLWQCYFYMWSQPRRIHINQLANHSLDFLGYLSSVRLKPLMVRSQMIENSFLIENAIKKFDTLMPITPMIESLVKAKFCNVLGHPMSKPVWAALSDSDIIERFGHIYRNLSHYHSGSLKKMSLYRIKYILRLSCARTLARKHKSTIRAFLKRLGVGLLEEFFTEEEQVFYLTFPKASSTSGELYRRRIWYLDIICINDLANYE.

This sequence belongs to the intron maturase 2 family. MatK subfamily.

The protein localises to the plastid. Its subcellular location is the chloroplast. Functionally, usually encoded in the trnK tRNA gene intron. Probably assists in splicing its own and other chloroplast group II introns. The sequence is that of Maturase K from Empetrum nigrum (Black crowberry).